The sequence spans 284 residues: 4-hydroxybenzoate octaprenyltransferase (284 aa).

A run of 8 helical transmembrane segments spans residues Pro-16–Gly-36, Trp-40–Val-60, Leu-91–Leu-111, Phe-132–Phe-152, Asn-157–Tyr-177, Ala-207–Phe-227, Ile-231–Ile-251, and Cys-259–Leu-279.

Belongs to the UbiA prenyltransferase family. Mg(2+) serves as cofactor.

It localises to the cell inner membrane. It catalyses the reaction all-trans-octaprenyl diphosphate + 4-hydroxybenzoate = 4-hydroxy-3-(all-trans-octaprenyl)benzoate + diphosphate. The protein operates within cofactor biosynthesis; ubiquinone biosynthesis. In terms of biological role, catalyzes the prenylation of para-hydroxybenzoate (PHB) with an all-trans polyprenyl group. Mediates the second step in the final reaction sequence of ubiquinone-8 (UQ-8) biosynthesis, which is the condensation of the polyisoprenoid side chain with PHB, generating the first membrane-bound Q intermediate 3-octaprenyl-4-hydroxybenzoate. In Janthinobacterium sp. (strain Marseille) (Minibacterium massiliensis), this protein is 4-hydroxybenzoate octaprenyltransferase.